Reading from the N-terminus, the 252-residue chain is 3-dehydroquinate dehydratase (252 aa).

3-dehydroquinate contacts are provided by residues serine 21, 46 to 48, and arginine 82; that span reads EWR. Histidine 143 serves as the catalytic Proton donor/acceptor. Residue lysine 170 is the Schiff-base intermediate with substrate of the active site. The 3-dehydroquinate site is built by arginine 213, serine 232, and glutamine 236.

The protein belongs to the type-I 3-dehydroquinase family. In terms of assembly, homodimer.

It catalyses the reaction 3-dehydroquinate = 3-dehydroshikimate + H2O. It functions in the pathway metabolic intermediate biosynthesis; chorismate biosynthesis; chorismate from D-erythrose 4-phosphate and phosphoenolpyruvate: step 3/7. Its function is as follows. Involved in the third step of the chorismate pathway, which leads to the biosynthesis of aromatic amino acids. Catalyzes the cis-dehydration of 3-dehydroquinate (DHQ) and introduces the first double bond of the aromatic ring to yield 3-dehydroshikimate. In Escherichia coli O17:K52:H18 (strain UMN026 / ExPEC), this protein is 3-dehydroquinate dehydratase.